Here is a 318-residue protein sequence, read N- to C-terminus: DNA-directed RNA polymerase subunit alpha (318 aa).

Positions 1–232 (MAHQRIVGPT…NLFSPLQNVR (232 aa)) are alpha N-terminal domain (alpha-NTD). The interval 246 to 318 (KMTEVLVEEL…HLPKEKFTKD (73 aa)) is alpha C-terminal domain (alpha-CTD).

The protein belongs to the RNA polymerase alpha chain family. In plastids the minimal PEP RNA polymerase catalytic core is composed of four subunits: alpha, beta, beta', and beta''. When a (nuclear-encoded) sigma factor is associated with the core the holoenzyme is formed, which can initiate transcription.

Its subcellular location is the plastid. It localises to the chloroplast. The enzyme catalyses RNA(n) + a ribonucleoside 5'-triphosphate = RNA(n+1) + diphosphate. In terms of biological role, DNA-dependent RNA polymerase catalyzes the transcription of DNA into RNA using the four ribonucleoside triphosphates as substrates. The chain is DNA-directed RNA polymerase subunit alpha from Chlorokybus atmophyticus (Soil alga).